The primary structure comprises 224 residues: Large ribosomal subunit protein uL4 (224 aa).

The disordered stretch occupies residues Arg-53–Ala-74.

The protein belongs to the universal ribosomal protein uL4 family. In terms of assembly, part of the 50S ribosomal subunit.

In terms of biological role, one of the primary rRNA binding proteins, this protein initially binds near the 5'-end of the 23S rRNA. It is important during the early stages of 50S assembly. It makes multiple contacts with different domains of the 23S rRNA in the assembled 50S subunit and ribosome. Forms part of the polypeptide exit tunnel. The protein is Large ribosomal subunit protein uL4 of Chlamydia pneumoniae (Chlamydophila pneumoniae).